The sequence spans 94 residues: Alpha-galactosyl-binding lectin (94 aa).

As to quaternary structure, homodimer. Post-translationally, contains three disulfide bonds.

Alpha-galactosyl-binding lectin with preference for galactose-alpha-1,4-galactose. In Lyophyllum decastes (Fried chicken mushroom), this protein is Alpha-galactosyl-binding lectin.